The sequence spans 77 residues: Conotoxin Ar5.1 a (77 aa).

The first 19 residues, 1–19 (MLCLPVFIILLLLASPAAS), serve as a signal peptide directing secretion. Residues 20-44 (NPLETRIQSDLIRAALEDADMKNEK) constitute a propeptide that is removed on maturation.

Belongs to the conotoxin T superfamily. Post-translationally, contains 2 disulfide bonds that can be either 'C1-C3, C2-C4' or 'C1-C4, C2-C3', since these disulfide connectivities have been observed for conotoxins with cysteine framework V (for examples, see AC P0DQQ7 and AC P81755). As to expression, expressed by the venom duct.

It is found in the secreted. The chain is Conotoxin Ar5.1 a from Conus arenatus (Sand-dusted cone).